Consider the following 266-residue polypeptide: Apolipoprotein A-I (266 aa).

The first 18 residues, 1–18 (MKAVVLTLAVLFLTGSQA), serve as a signal peptide directing secretion. Tandem repeats lie at residues 67–88 (LKLL…EQIG) and 89–110 (PVTQ…QEMS). Residues 67 to 266 (LKLLDNWDSL…DEAAKKLNTQ (200 aa)) are 10 X approximate tandem repeats. At Met-109 the chain carries Methionine sulfoxide. The 3; half-length repeat unit spans residues 111-121 (KDLEEVKQKVQ). Tandem repeats lie at residues 122–143 (PYLD…QKVA), 144–165 (PLGT…EKLT), 166–187 (PLGE…AHLA), 188–209 (PYSD…EGGS), and 210–231 (ASLA…EKAK). One copy of the 9; half-length repeat lies at 232 to 242 (PALEDLRQGLL). Repeat 10 spans residues 243–266 (PVLESFKVSLLAAVDEAAKKLNTQ).

It belongs to the apolipoprotein A1/A4/E family. As to quaternary structure, homodimer. Interacts with APOA1BP and CLU. Component of a sperm activating protein complex (SPAP), consisting of APOA1, an immunoglobulin heavy chain, an immunoglobulin light chain and albumin. Interacts with NDRG1. Interacts with SCGB3A2. Interacts with NAXE and YJEFN3. Post-translationally, glycosylated. In terms of processing, palmitoylated. Phosphorylation sites are present in the extracellular medium.

The protein localises to the secreted. Functionally, participates in the reverse transport of cholesterol from tissues to the liver for excretion by promoting cholesterol efflux from tissues and by acting as a cofactor for the lecithin cholesterol acyltransferase (LCAT). As part of the SPAP complex, activates spermatozoa motility. This Mustela putorius furo (European domestic ferret) protein is Apolipoprotein A-I (APOA1).